A 348-amino-acid polypeptide reads, in one-letter code: 3-keto-steroid reductase (348 aa).

The NADP(+) site is built by Leu18, Thr41, and Arg47. Active-site proton donor residues include Ser180 and Tyr203. NADP(+)-binding residues include Tyr203, Lys207, and Ser238. The active-site Lowers pKa of active site Tyr is Lys207.

It belongs to the short-chain dehydrogenases/reductases (SDR) family. ERG27 subfamily.

The catalysed reaction is a 3beta-hydroxysteroid + NADP(+) = a 3-oxosteroid + NADPH + H(+). It functions in the pathway steroid biosynthesis; zymosterol biosynthesis; zymosterol from lanosterol: step 5/6. Responsible for the reduction of the keto group on the C-3 of sterols. This chain is 3-keto-steroid reductase (ERG27), found in Candida glabrata (strain ATCC 2001 / BCRC 20586 / JCM 3761 / NBRC 0622 / NRRL Y-65 / CBS 138) (Yeast).